Reading from the N-terminus, the 105-residue chain is Spermatogenesis-associated protein 8 (105 aa).

As to expression, expressed at high levels in adult testis, at moderate levels in sperm and at low levels in fetal testis. Not detected in other tissues.

This Homo sapiens (Human) protein is Spermatogenesis-associated protein 8 (SPATA8).